Reading from the N-terminus, the 215-residue chain is Phosphatidylserine decarboxylase proenzyme (215 aa).

The active-site Schiff-base intermediate with substrate; via pyruvic acid is S185. Residue S185 is modified to Pyruvic acid (Ser); by autocatalysis.

Belongs to the phosphatidylserine decarboxylase family. PSD-A subfamily. In terms of assembly, heterodimer of a large membrane-associated beta subunit and a small pyruvoyl-containing alpha subunit. Requires pyruvate as cofactor. Post-translationally, is synthesized initially as an inactive proenzyme. Formation of the active enzyme involves a self-maturation process in which the active site pyruvoyl group is generated from an internal serine residue via an autocatalytic post-translational modification. Two non-identical subunits are generated from the proenzyme in this reaction, and the pyruvate is formed at the N-terminus of the alpha chain, which is derived from the carboxyl end of the proenzyme. The post-translation cleavage follows an unusual pathway, termed non-hydrolytic serinolysis, in which the side chain hydroxyl group of the serine supplies its oxygen atom to form the C-terminus of the beta chain, while the remainder of the serine residue undergoes an oxidative deamination to produce ammonia and the pyruvoyl prosthetic group on the alpha chain.

Its subcellular location is the cell membrane. It catalyses the reaction a 1,2-diacyl-sn-glycero-3-phospho-L-serine + H(+) = a 1,2-diacyl-sn-glycero-3-phosphoethanolamine + CO2. Its pathway is phospholipid metabolism; phosphatidylethanolamine biosynthesis; phosphatidylethanolamine from CDP-diacylglycerol: step 2/2. Functionally, catalyzes the formation of phosphatidylethanolamine (PtdEtn) from phosphatidylserine (PtdSer). In Streptomyces griseus subsp. griseus (strain JCM 4626 / CBS 651.72 / NBRC 13350 / KCC S-0626 / ISP 5235), this protein is Phosphatidylserine decarboxylase proenzyme.